A 403-amino-acid polypeptide reads, in one-letter code: MKLMKLPSEFQKALPILKKIKEAGFEAYFVGGGVRDILLDRPIHDVDIATSSYPEETKAIFSRTVDIGIEHGTVLVLENDAEYEITTFRTEDIYVDYRRPSNVSFVRSLEEDLKRRDFTVNALALDETGQVIDKFHGLQDLKRKELRAVGKAEERFQEDALRIMRGFRFAASLDFKIEDETFEAMKTHAHLLQKISVERSFIELDKLFMAPNWKLGLTYFIEAQAYNYLPGLENRQSELTGMMDHFDAHFVFDSSEQAWANMIIALSLDKEKAFLKSWKTSNDFQKQVTQIVTLYRKRESALLSKMDLYMYGKEAAILSENLRKAKGLPTDFNHMMRTYDDLTIYDKHEIVVNGRYLMEKLNMKAGPQLGHLLKKVEKAIVEGTLANKVGDIEAFIMKELENE.

The ATP site is built by glycine 32 and arginine 35. CTP contacts are provided by glycine 32 and arginine 35. Positions 45 and 47 each coordinate Mg(2+). ATP is bound by residues arginine 116, aspartate 159, arginine 162, arginine 165, and arginine 168. Residues arginine 116, aspartate 159, arginine 162, arginine 165, and arginine 168 each contribute to the CTP site.

This sequence belongs to the tRNA nucleotidyltransferase/poly(A) polymerase family. Bacterial CCA-adding enzyme type 3 subfamily. As to quaternary structure, homodimer. It depends on Mg(2+) as a cofactor.

It carries out the reaction a tRNA precursor + 2 CTP + ATP = a tRNA with a 3' CCA end + 3 diphosphate. The enzyme catalyses a tRNA with a 3' CCA end + 2 CTP + ATP = a tRNA with a 3' CCACCA end + 3 diphosphate. Catalyzes the addition and repair of the essential 3'-terminal CCA sequence in tRNAs without using a nucleic acid template. Adds these three nucleotides in the order of C, C, and A to the tRNA nucleotide-73, using CTP and ATP as substrates and producing inorganic pyrophosphate. tRNA 3'-terminal CCA addition is required both for tRNA processing and repair. Also involved in tRNA surveillance by mediating tandem CCA addition to generate a CCACCA at the 3' terminus of unstable tRNAs. While stable tRNAs receive only 3'-terminal CCA, unstable tRNAs are marked with CCACCA and rapidly degraded. The polypeptide is CCA-adding enzyme (Streptococcus uberis (strain ATCC BAA-854 / 0140J)).